Consider the following 485-residue polypeptide: Adenosylhomocysteinase (485 aa).

Residues Thr-64, Asp-139, and Glu-205 each contribute to the substrate site. Position 206-208 (206-208 (TTT)) interacts with NAD(+). 2 residues coordinate substrate: Lys-235 and Asp-239. NAD(+)-binding positions include Asn-240, 269–274 (GYGDVG), Glu-292, Asn-327, 348–350 (IGH), and Asn-397.

Belongs to the adenosylhomocysteinase family. As to quaternary structure, homotetramer. NAD(+) is required as a cofactor.

The catalysed reaction is S-adenosyl-L-homocysteine + H2O = L-homocysteine + adenosine. The protein operates within amino-acid biosynthesis; L-homocysteine biosynthesis; L-homocysteine from S-adenosyl-L-homocysteine: step 1/1. Adenosylhomocysteine is a competitive inhibitor of S-adenosyl-L-methionine-dependent methyl transferase reactions; therefore adenosylhomocysteinase may play a key role in the control of methylations via regulation of the intracellular concentration of adenosylhomocysteine. The polypeptide is Adenosylhomocysteinase (SAHH) (Triticum aestivum (Wheat)).